We begin with the raw amino-acid sequence, 92 residues long: Dynein light chain 1, cytoplasmic (92 aa).

Belongs to the dynein light chain family. Homodimer. Cytoplasmic dynein consists of two catalytic heavy chains (HCs) and a number of non-catalytic subunits which present intermediate chains (ICs), light intermediate chains (LICs) and light chains (LCs). Component of the nuclear pore complex (NPC). NPC constitutes the exclusive means of nucleocytoplasmic transport. NPCs allow the passive diffusion of ions and small molecules and the active, nuclear transport receptor-mediated bidirectional transport of macromolecules such as proteins, RNAs, ribonucleoparticles (RNPs), and ribosomal subunits across the nuclear envelope. Due to its 8-fold rotational symmetry, all subunits are present with 8 copies or multiples thereof. Part of the NUP82 subcomplex. In the complex, interacts directly with Nup159.

Its subcellular location is the cytoplasm. It localises to the cytoskeleton. It is found in the nucleus. The protein resides in the nuclear pore complex. Functionally, acts as one of several non-catalytic accessory components of the cytoplasmic dynein complex that are thought to be involved in linking dynein to cargos and to adapter proteins that regulate dynein function. Cytoplasmic dynein 1 acts as a motor for the intracellular retrograde motility of vesicles and organelles along microtubules. May play a role in changing or maintaining the spatial distribution of cytoskeletal structures. Also a component of the nuclear pore complex where it may contribute to the stable association of the Nup82 subcomplex with the NPC. The polypeptide is Dynein light chain 1, cytoplasmic (DYN2) (Saccharomyces cerevisiae (strain ATCC 204508 / S288c) (Baker's yeast)).